The primary structure comprises 393 residues: Probable pectinesterase 8 (393 aa).

An N-terminal signal peptide occupies residues 1-19 (MKIISLSISIGIAIIAVLA). 5 N-linked (GlcNAc...) asparagine glycosylation sites follow: Asn-100, Asn-113, Asn-140, Asn-156, and Asn-163. Residue Thr-165 participates in substrate binding. Asn-182 carries N-linked (GlcNAc...) asparagine glycosylation. Gln-200 is a binding site for substrate. The Proton donor role is filled by Asp-223. Asp-244 serves as the catalytic Nucleophile. A glycan (N-linked (GlcNAc...) asparagine) is linked at Asn-295. Arg-308 is a binding site for substrate. 3 N-linked (GlcNAc...) asparagine glycosylation sites follow: Asn-350, Asn-369, and Asn-378.

Belongs to the pectinesterase family. As to expression, expressed in siliques.

It is found in the secreted. It localises to the cell wall. The enzyme catalyses [(1-&gt;4)-alpha-D-galacturonosyl methyl ester](n) + n H2O = [(1-&gt;4)-alpha-D-galacturonosyl](n) + n methanol + n H(+). It participates in glycan metabolism; pectin degradation; 2-dehydro-3-deoxy-D-gluconate from pectin: step 1/5. Acts in the modification of cell walls via demethylesterification of cell wall pectin. In Arabidopsis thaliana (Mouse-ear cress), this protein is Probable pectinesterase 8 (PME8).